Reading from the N-terminus, the 32-residue chain is Chaperone protein DnaK (32 aa).

Belongs to the heat shock protein 70 family.

Functionally, acts as a chaperone. The protein is Chaperone protein DnaK of Anabaena sp. (strain L31).